The following is a 754-amino-acid chain: Probable TonB-dependent siderophore receptor PirA (754 aa).

Positions Met1–Ala24 are cleaved as a signal peptide. Residues Glu54–Lys181 enclose the TBDR plug domain. Positions Glu186–Phe754 constitute a TBDR beta-barrel domain. The span at Val404–Gly414 shows a compositional bias: polar residues. The interval Val404–Gly424 is disordered. A disulfide bridge connects residues Cys511 and Cys519. Positions Gln737–Phe754 match the TonB C-terminal box motif.

Belongs to the TonB-dependent receptor family.

It is found in the cell outer membrane. Probably involved in the initial step of iron uptake by binding iron chelating siderophores, thereby allowing extraction of iron from the environment. May bind the siderophore, ferric enterobactin, with micromolar affinity. The sequence is that of Probable TonB-dependent siderophore receptor PirA from Acinetobacter baumannii (strain ATCC 19606 / DSM 30007 / JCM 6841 / CCUG 19606 / CIP 70.34 / NBRC 109757 / NCIMB 12457 / NCTC 12156 / 81).